The primary structure comprises 427 residues: Serine--tRNA ligase (427 aa).

Thr233–Glu235 is a binding site for L-serine. ATP is bound at residue Arg264–Glu266. An L-serine-binding site is contributed by Glu287. Glu351–Ser354 lines the ATP pocket. An L-serine-binding site is contributed by Ser387.

This sequence belongs to the class-II aminoacyl-tRNA synthetase family. Type-1 seryl-tRNA synthetase subfamily. Homodimer. The tRNA molecule binds across the dimer.

The protein resides in the cytoplasm. The catalysed reaction is tRNA(Ser) + L-serine + ATP = L-seryl-tRNA(Ser) + AMP + diphosphate + H(+). It carries out the reaction tRNA(Sec) + L-serine + ATP = L-seryl-tRNA(Sec) + AMP + diphosphate + H(+). It participates in aminoacyl-tRNA biosynthesis; selenocysteinyl-tRNA(Sec) biosynthesis; L-seryl-tRNA(Sec) from L-serine and tRNA(Sec): step 1/1. Functionally, catalyzes the attachment of serine to tRNA(Ser). Is also able to aminoacylate tRNA(Sec) with serine, to form the misacylated tRNA L-seryl-tRNA(Sec), which will be further converted into selenocysteinyl-tRNA(Sec). The sequence is that of Serine--tRNA ligase from Buchnera aphidicola subsp. Acyrthosiphon pisum (strain 5A).